The following is a 684-amino-acid chain: Glycine--tRNA ligase beta subunit (684 aa).

Belongs to the class-II aminoacyl-tRNA synthetase family. Tetramer of two alpha and two beta subunits.

The protein resides in the cytoplasm. It catalyses the reaction tRNA(Gly) + glycine + ATP = glycyl-tRNA(Gly) + AMP + diphosphate. The polypeptide is Glycine--tRNA ligase beta subunit (Pseudomonas savastanoi pv. phaseolicola (strain 1448A / Race 6) (Pseudomonas syringae pv. phaseolicola (strain 1448A / Race 6))).